A 728-amino-acid chain; its full sequence is Pre-mRNA-splicing ATP-dependent RNA helicase prp-28 (728 aa).

The disordered stretch occupies residues lysine 19–tyrosine 155. 3 stretches are compositionally biased toward basic and acidic residues: residues proline 33–lysine 59, arginine 109–glutamine 125, and glutamate 137–alanine 153. The Q motif signature appears at arginine 293–arginine 321. Positions isoleucine 324–valine 527 constitute a Helicase ATP-binding domain. An ATP-binding site is contributed by alanine 337–threonine 344. Residues aspartate 450 to aspartate 453 carry the DEAD box motif. In terms of domain architecture, Helicase C-terminal spans threonine 538–glutamate 701. Residues lysine 692–asparagine 728 are disordered. A compositionally biased stretch (basic and acidic residues) spans valine 693–alanine 703.

It belongs to the DEAD box helicase family. DDX23/PRP28 subfamily. Component of the U5 snRNP complex.

It localises to the cytoplasm. The protein localises to the nucleus. It carries out the reaction ATP + H2O = ADP + phosphate + H(+). Functionally, ATP-dependent RNA helicase involved in mRNA splicing. May destabilize the U1/5'-splice site duplex to permit an effective competition for the 5'-splice site by the U6 snRNA, resulting in the switch between U1 and U6 at the 5'-splice site. May also act to unwind the U4/U6 base-pairing interaction in the U4/U6/U5 snRNP, facilitating the first covalent step of splicing. This Neurospora crassa (strain ATCC 24698 / 74-OR23-1A / CBS 708.71 / DSM 1257 / FGSC 987) protein is Pre-mRNA-splicing ATP-dependent RNA helicase prp-28 (prp-28).